A 602-amino-acid polypeptide reads, in one-letter code: Threonine--tRNA ligase (602 aa).

The interval 208 to 499 (DHRKLGIELK…LTEHCAGEFP (292 aa)) is catalytic. Zn(2+)-binding residues include Cys300, His351, and His476.

This sequence belongs to the class-II aminoacyl-tRNA synthetase family. As to quaternary structure, homodimer. The cofactor is Zn(2+).

It is found in the cytoplasm. It catalyses the reaction tRNA(Thr) + L-threonine + ATP = L-threonyl-tRNA(Thr) + AMP + diphosphate + H(+). In terms of biological role, catalyzes the attachment of threonine to tRNA(Thr) in a two-step reaction: L-threonine is first activated by ATP to form Thr-AMP and then transferred to the acceptor end of tRNA(Thr). Also edits incorrectly charged L-seryl-tRNA(Thr). The chain is Threonine--tRNA ligase from Campylobacter jejuni subsp. doylei (strain ATCC BAA-1458 / RM4099 / 269.97).